We begin with the raw amino-acid sequence, 411 residues long: Solute carrier RCH1 (411 aa).

The Cytoplasmic segment spans residues 1 to 17; the sequence is MSLETFRESKAYKWTSK. The helical transmembrane segment at 18–38 threads the bilayer; the sequence is VISFLIGQWFFIFLGVFIALA. Residues 39 to 52 are Extracellular-facing; it reads HSYPEFAKQGGTIR. A helical transmembrane segment spans residues 53-73; that stretch reads AEYSIGYGAVAVIFLISGLSM. Residues 74-89 are Cytoplasmic-facing; the sequence is STKQLLVNVANWRAHF. A helical membrane pass occupies residues 90–110; sequence TVLSMSFLVTSAIIYGIASGI. Topologically, residues 111–120 are extracellular; the sequence is KASHNGQIDD. A helical membrane pass occupies residues 121 to 141; that stretch reads WLLIGLIVTHACPTTVSSNVV. Residues 142–150 are Cytoplasmic-facing; that stretch reads MTKQAHGND. The chain crosses the membrane as a helical span at residues 151–171; sequence ILTLCEVFIGNVLGAFITPAL. Over 172–204 the chain is Extracellular; sequence LQMYMRGTWEIGNPSHQTQGDSTVQELYAHTMK. The helical transmembrane segment at 205–225 threads the bilayer; that stretch reads QLGLSVFVPLFVGQVVQNIFP. The Cytoplasmic segment spans residues 226–242; the sequence is KQTKWCLTTFKLNKVGS. The chain crosses the membrane as a helical span at residues 243–263; sequence FMLLLIMFQSFSTAFAQHAFT. Residues 264-269 lie on the Extracellular side of the membrane; sequence SVSHAS. Residues 270–290 traverse the membrane as a helical segment; the sequence is IIFLVFFNIGIYLFFTVLTFF. Over 291-329 the chain is Cytoplasmic; the sequence is YSRPFWILRVFKEEPNESSSKLYRYSYAFFRPFYYNRKD. The chain crosses the membrane as a helical span at residues 330–350; sequence TVAVMLCGPAKTAALGVSLVS. At 351-361 the chain is on the extracellular side; that stretch reads SQYGSHNPKLG. A helical transmembrane segment spans residues 362–382; that stretch reads IILVPLVLYQAEQVMTANVLV. Residues 383-411 lie on the Cytoplasmic side of the membrane; that stretch reads SFMRKWIHAEDKVPEDEETSVGSDNDPKK.

This sequence belongs to the bile acid:sodium symporter (BASS) (TC 2.A.28) family.

The protein resides in the cell membrane. Its subcellular location is the bud neck. Solute carrier protein that negatively regulates the cytosolic homeostasis in response to high levels of extracellular calcium. The polypeptide is Solute carrier RCH1 (Candida albicans (strain SC5314 / ATCC MYA-2876) (Yeast)).